A 418-amino-acid polypeptide reads, in one-letter code: Tyrosine--tRNA ligase (418 aa).

Tyr-38 contributes to the L-tyrosine binding site. The short motif at 43 to 52 is the 'HIGH' region element; that stretch reads CTAKSLHVGS. 2 residues coordinate L-tyrosine: Tyr-175 and Gln-179. The 'KMSKS' region signature appears at 235–239; the sequence is KMGKT. Lys-238 lines the ATP pocket. In terms of domain architecture, S4 RNA-binding spans 348 to 413; the sequence is LPIIKLLQMC…CGKKRHLKVM (66 aa).

Belongs to the class-I aminoacyl-tRNA synthetase family. TyrS type 1 subfamily. Homodimer.

It localises to the cytoplasm. It catalyses the reaction tRNA(Tyr) + L-tyrosine + ATP = L-tyrosyl-tRNA(Tyr) + AMP + diphosphate + H(+). Its function is as follows. Catalyzes the attachment of tyrosine to tRNA(Tyr) in a two-step reaction: tyrosine is first activated by ATP to form Tyr-AMP and then transferred to the acceptor end of tRNA(Tyr). The protein is Tyrosine--tRNA ligase of Ehrlichia chaffeensis (strain ATCC CRL-10679 / Arkansas).